Reading from the N-terminus, the 93-residue chain is MADITDIKTILYTEKSLNLQEQGVVVIQTSPKMTKTGLKAVLKEYFGVTPKSINSLRMDGKIKRFRGRLGQRNNYKKFYVKLPEGVSLENTEA.

It belongs to the universal ribosomal protein uL23 family. As to quaternary structure, part of the 50S ribosomal subunit. Contacts protein L29, and trigger factor when it is bound to the ribosome.

Its function is as follows. One of the early assembly proteins it binds 23S rRNA. One of the proteins that surrounds the polypeptide exit tunnel on the outside of the ribosome. Forms the main docking site for trigger factor binding to the ribosome. The polypeptide is Large ribosomal subunit protein uL23 (Campylobacter jejuni subsp. jejuni serotype O:2 (strain ATCC 700819 / NCTC 11168)).